The following is a 146-amino-acid chain: Cytidine deaminase (146 aa).

Residues 13–140 (EHVQRLLLSS…ELLPASFGPE (128 aa)) enclose the CMP/dCMP-type deaminase domain. Residue 54-56 (NIE) participates in substrate binding. C65 provides a ligand contact to Zn(2+). E67 (proton donor) is an active-site residue. C99 and C102 together coordinate Zn(2+).

It belongs to the cytidine and deoxycytidylate deaminase family. As to quaternary structure, homotetramer. The cofactor is Zn(2+).

The enzyme catalyses cytidine + H2O + H(+) = uridine + NH4(+). The catalysed reaction is 2'-deoxycytidine + H2O + H(+) = 2'-deoxyuridine + NH4(+). Its function is as follows. This enzyme scavenges exogenous and endogenous cytidine and 2'-deoxycytidine for UMP synthesis. The chain is Cytidine deaminase (Cda) from Mus musculus (Mouse).